The chain runs to 469 residues: UDP-N-acetylmuramate--L-alanine ligase (469 aa).

Position 122–128 (122–128 (GTHGKTT)) interacts with ATP.

This sequence belongs to the MurCDEF family.

The protein localises to the cytoplasm. The catalysed reaction is UDP-N-acetyl-alpha-D-muramate + L-alanine + ATP = UDP-N-acetyl-alpha-D-muramoyl-L-alanine + ADP + phosphate + H(+). It functions in the pathway cell wall biogenesis; peptidoglycan biosynthesis. Its function is as follows. Cell wall formation. The protein is UDP-N-acetylmuramate--L-alanine ligase of Legionella pneumophila (strain Paris).